The chain runs to 933 residues: Exosome complex exonuclease RRP44 homolog A (933 aa).

The PINc domain occupies 50–163 (KIIVVDTNVV…LVTNDRENKR (114 aa)). The CSD1 domain maps to 217–321 (QEHKPMSEIT…NVDDAPRTSN (105 aa)). Residues 296–336 (AEEDDEEDDTVHLAPDNVDDAPRTSNLSHETSGDKNAAPVR) form a disordered region. Positions 371–438 (ALFVSKDRRI…ETEVVLIEND (68 aa)) constitute a CSD2 domain. The RNB domain occupies 469–798 (RQDLRHLLVF…FVHRLLAASL (330 aa)). Mg(2+)-binding residues include Asp481 and Asp490.

The protein belongs to the RNR ribonuclease family. Probable component of the RNA exosome complex. The cofactor is Mg(2+).

It is found in the nucleus. Functionally, catalytic component of the RNA exosome complex which has 3'-&gt;5' exoribonuclease activity and participates in a multitude of cellular RNA processing and degradation events. Required for 5.8S rRNA intermediate processing and the degradation of 5' external transcribed spacer (5' ETS), a maturation by-product of rRNA synthesis. Is not involved in the degradation of turnip crinkle virus (TCV) RNA and significant virus resistance. Required for normal development of female gametophytes and early embryogenesis. In Arabidopsis thaliana (Mouse-ear cress), this protein is Exosome complex exonuclease RRP44 homolog A.